A 333-amino-acid polypeptide reads, in one-letter code: Probable tRNA pseudouridine synthase B (333 aa).

Asp-66 serves as the catalytic Nucleophile. The 76-residue stretch at 233 to 308 (LKKIIVKDSA…EVVEITRVIM (76 aa)) folds into the PUA domain.

The protein belongs to the pseudouridine synthase TruB family. Type 2 subfamily.

The catalysed reaction is uridine(55) in tRNA = pseudouridine(55) in tRNA. Could be responsible for synthesis of pseudouridine from uracil-55 in the psi GC loop of transfer RNAs. This chain is Probable tRNA pseudouridine synthase B, found in Methanococcus maripaludis (strain C5 / ATCC BAA-1333).